The following is a 571-amino-acid chain: Carboxylesterase 3 (571 aa).

The first 26 residues, 1–26, serve as a signal peptide directing secretion; sequence MERAVRVESGVLVGVVCLLLACPATA. A disulfide bond links Cys-97 and Cys-124. Asn-105 is a glycosylation site (N-linked (GlcNAc...) asparagine). Ser-229 (acyl-ester intermediate) is an active-site residue. An intrachain disulfide couples Cys-281 to Cys-292. Residues Glu-347 and His-460 each act as charge relay system in the active site. A Prevents secretion from ER motif is present at residues 568–571; that stretch reads QEDL.

The protein belongs to the type-B carboxylesterase/lipase family. In terms of processing, N-glycosylated. In terms of tissue distribution, expressed in liver, colon and small intestine.

It is found in the endoplasmic reticulum lumen. It catalyses the reaction a carboxylic ester + H2O = an alcohol + a carboxylate + H(+). Its function is as follows. Involved in the detoxification of xenobiotics and in the activation of ester and amide prodrugs. Shows low catalytic efficiency for hydrolysis of CPT-11 (7-ethyl-10-[4-(1-piperidino)-1-piperidino]-carbonyloxycamptothecin), a prodrug for camptothecin used in cancer therapeutics. The chain is Carboxylesterase 3 (CES3) from Homo sapiens (Human).